Reading from the N-terminus, the 302-residue chain is 33 kDa chaperonin (302 aa).

Cystine bridges form between Cys234–Cys236 and Cys267–Cys270.

It belongs to the HSP33 family. Post-translationally, under oxidizing conditions two disulfide bonds are formed involving the reactive cysteines. Under reducing conditions zinc is bound to the reactive cysteines and the protein is inactive.

The protein resides in the cytoplasm. In terms of biological role, redox regulated molecular chaperone. Protects both thermally unfolding and oxidatively damaged proteins from irreversible aggregation. Plays an important role in the bacterial defense system toward oxidative stress. This chain is 33 kDa chaperonin, found in Neisseria meningitidis serogroup A / serotype 4A (strain DSM 15465 / Z2491).